A 421-amino-acid polypeptide reads, in one-letter code: 3-oxoacyl-[acyl-carrier-protein] synthase 2 (421 aa).

Positions 1-417 (MRRVVITGTG…GTNASLILRR (417 aa)) constitute a Ketosynthase family 3 (KS3) domain. Active-site for beta-ketoacyl synthase activity residues include C170, H311, and H347.

It belongs to the thiolase-like superfamily. Beta-ketoacyl-ACP synthases family. In terms of assembly, homodimer.

It catalyses the reaction a fatty acyl-[ACP] + malonyl-[ACP] + H(+) = a 3-oxoacyl-[ACP] + holo-[ACP] + CO2. The catalysed reaction is (9Z)-hexadecenoyl-[ACP] + malonyl-[ACP] + H(+) = 3-oxo-(11Z)-octadecenoyl-[ACP] + holo-[ACP] + CO2. It functions in the pathway lipid metabolism; fatty acid biosynthesis. Functionally, involved in the type II fatty acid elongation cycle. Catalyzes the elongation of a wide range of acyl-ACP by the addition of two carbons from malonyl-ACP to an acyl acceptor. Can efficiently catalyze the conversion of palmitoleoyl-ACP (cis-hexadec-9-enoyl-ACP) to cis-vaccenoyl-ACP (cis-octadec-11-enoyl-ACP), an essential step in the thermal regulation of fatty acid composition. The chain is 3-oxoacyl-[acyl-carrier-protein] synthase 2 (fabF) from Rhizobium meliloti (strain 1021) (Ensifer meliloti).